Reading from the N-terminus, the 376-residue chain is Pyrimidine monooxygenase RutA (376 aa).

Residues 61–62, Asn-127, Glu-136, 152–153, and Ser-202 each bind FMN; these read IK and RY.

This sequence belongs to the NtaA/SnaA/DszA monooxygenase family. RutA subfamily.

It carries out the reaction uracil + FMNH2 + NADH + O2 = (Z)-3-ureidoacrylate + FMN + NAD(+) + H2O + H(+). The enzyme catalyses thymine + FMNH2 + NADH + O2 = (Z)-2-methylureidoacrylate + FMN + NAD(+) + H2O + H(+). In terms of biological role, catalyzes the pyrimidine ring opening between N-3 and C-4 by an unusual flavin hydroperoxide-catalyzed mechanism, adding oxygen atoms in the process to yield ureidoacrylate peracid, that immediately reacts with FMN forming ureidoacrylate and FMN-N(5)-oxide. The FMN-N(5)-oxide reacts spontaneously with NADH to produce FMN. Requires the flavin reductase RutF to regenerate FMN in vivo. The polypeptide is Pyrimidine monooxygenase RutA (Methylorubrum extorquens (strain CM4 / NCIMB 13688) (Methylobacterium extorquens)).